The sequence spans 86 residues: Putative protein adenylyltransferase MJ1215 (86 aa).

The short motif at 35–49 (GSYARGEQKETSDID) is the GSX(10)DXD motif element. D47, D49, and D79 together coordinate Mg(2+).

The protein belongs to the MntA antitoxin family. As to quaternary structure, probably forms a complex with cognate toxin MJ1216. Mg(2+) serves as cofactor.

It catalyses the reaction L-tyrosyl-[protein] + ATP = O-(5'-adenylyl)-L-tyrosyl-[protein] + diphosphate. It carries out the reaction O-(5'-adenylyl)-L-tyrosyl-[protein] + ATP = O-[5'-(adenylyl-(5'-&gt;3')-adenylyl)]-L-tyrosyl-[protein] + diphosphate. Functionally, probable antitoxin component of a putative type VII toxin-antitoxin (TA) system. Neutralizes cognate toxic MJ1216 by di-AMPylation. This chain is Putative protein adenylyltransferase MJ1215, found in Methanocaldococcus jannaschii (strain ATCC 43067 / DSM 2661 / JAL-1 / JCM 10045 / NBRC 100440) (Methanococcus jannaschii).